Consider the following 58-residue polypeptide: MKKNRHSRDMQNHKKPMNKKVLEEEFSSELGDYNAGKIIETLEVTKPEKKKEKNKKQQ.

2 disordered regions span residues 1-20 (MKKN…MNKK) and 38-58 (IIET…KKQQ).

This is an uncharacterized protein from Bacillus subtilis (strain 168).